We begin with the raw amino-acid sequence, 211 residues long: ATP phosphoribosyltransferase (211 aa).

This sequence belongs to the ATP phosphoribosyltransferase family. Short subfamily. In terms of assembly, heteromultimer composed of HisG and HisZ subunits.

The protein localises to the cytoplasm. The catalysed reaction is 1-(5-phospho-beta-D-ribosyl)-ATP + diphosphate = 5-phospho-alpha-D-ribose 1-diphosphate + ATP. Its pathway is amino-acid biosynthesis; L-histidine biosynthesis; L-histidine from 5-phospho-alpha-D-ribose 1-diphosphate: step 1/9. In terms of biological role, catalyzes the condensation of ATP and 5-phosphoribose 1-diphosphate to form N'-(5'-phosphoribosyl)-ATP (PR-ATP). Has a crucial role in the pathway because the rate of histidine biosynthesis seems to be controlled primarily by regulation of HisG enzymatic activity. The sequence is that of ATP phosphoribosyltransferase from Pseudomonas putida (strain W619).